The chain runs to 275 residues: Putative ABC transporter permease protein ORF2 (275 aa).

Transmembrane regions (helical) follow at residues 11–31 (YFIF…FMLF), 74–94 (IAVS…AFAF), 108–128 (LIIA…YVLT), 136–156 (TVFA…IFIL), 185–205 (ILLP…GTYL), and 239–259 (IPAI…AYIF). Residues 69-260 (LKNSVIAVSI…LPMLIAYIFG (192 aa)) form the ABC transmembrane type-1 domain.

The protein belongs to the binding-protein-dependent transport system permease family. MalFG subfamily.

The protein localises to the cell membrane. This chain is Putative ABC transporter permease protein ORF2, found in Caldicellulosiruptor sp. (strain Rt8B.4).